Reading from the N-terminus, the 713-residue chain is Metal transporter CNNM3 (713 aa).

The helical transmembrane segment at 7–29 threads the bilayer; sequence AVVGWLGWVLAAFCLGSTAGEAA. Asparagine 73 carries N-linked (GlcNAc...) asparagine glycosylation. The region spanning 136–314 is the CNNM transmembrane domain; the sequence is EAAPPWALGL…DPYSDLSKGV (179 aa). 4 helical membrane-spanning segments follow: residues 137-157, 199-219, 227-247, and 267-287; these read AAPPWALGLGAAGLLALAAVA, CALGALLLLASLAQAALAVLL, AVPAVLGCAGLVFLVGEVLPA, and LAVLLTLPVALPVGQLLELAA. CBS domains are found at residues 324-385 and 392-458; these read LTPL…CTPL and YNHP…ILDE. Positions 664–713 are disordered; sequence LPPSPENAELQAIPGSQTRLLGDKSRETAGSTNSRPSIPVEESPGRNPGV. A phosphoserine mark is found at serine 667 and serine 706.

It belongs to the ACDP family. As to expression, widely expressed with highest levels in brain, kidney, liver, lung and heart.

It is found in the cell membrane. Probable metal transporter. The chain is Metal transporter CNNM3 (Cnnm3) from Mus musculus (Mouse).